The chain runs to 23 residues: NADH-ubiquinone oxidoreductase 29 kDa subunit (23 aa).

Complex I is composed of about 45 different subunits.

It is found in the mitochondrion inner membrane. The catalysed reaction is a ubiquinone + NADH + 5 H(+)(in) = a ubiquinol + NAD(+) + 4 H(+)(out). Transfer of electrons from NADH to the respiratory chain. The immediate electron acceptor for the enzyme is believed to be ubiquinone. The polypeptide is NADH-ubiquinone oxidoreductase 29 kDa subunit (Solanum tuberosum (Potato)).